Here is a 390-residue protein sequence, read N- to C-terminus: Chorismate synthase (390 aa).

Arg-39 and Arg-45 together coordinate NADP(+). FMN contacts are provided by residues 132–134, 253–254, Gly-298, 313–317, and Arg-339; these read RSS, NA, and KPIPT.

It belongs to the chorismate synthase family. Homotetramer. Requires FMNH2 as cofactor.

It catalyses the reaction 5-O-(1-carboxyvinyl)-3-phosphoshikimate = chorismate + phosphate. Its pathway is metabolic intermediate biosynthesis; chorismate biosynthesis; chorismate from D-erythrose 4-phosphate and phosphoenolpyruvate: step 7/7. Catalyzes the anti-1,4-elimination of the C-3 phosphate and the C-6 proR hydrogen from 5-enolpyruvylshikimate-3-phosphate (EPSP) to yield chorismate, which is the branch point compound that serves as the starting substrate for the three terminal pathways of aromatic amino acid biosynthesis. This reaction introduces a second double bond into the aromatic ring system. This chain is Chorismate synthase, found in Bacillus cytotoxicus (strain DSM 22905 / CIP 110041 / 391-98 / NVH 391-98).